Consider the following 59-residue polypeptide: Large ribosomal subunit protein uL30 (59 aa).

Belongs to the universal ribosomal protein uL30 family. In terms of assembly, part of the 50S ribosomal subunit.

This Streptococcus agalactiae serotype Ia (strain ATCC 27591 / A909 / CDC SS700) protein is Large ribosomal subunit protein uL30.